The following is a 677-amino-acid chain: UPF0313 protein RPA0679 (677 aa).

A Radical SAM core domain is found at 335-601 (AWDMIKTSVT…VEAIKGLRQR (267 aa)). [4Fe-4S] cluster-binding residues include C349, C353, and C356. The interval 635–677 (RPDQLVPAHQPPGTGKAAGTRRPVRGDGPKPQRFTTKGVRLVK) is disordered.

This sequence belongs to the UPF0313 family. It depends on [4Fe-4S] cluster as a cofactor.

The chain is UPF0313 protein RPA0679 from Rhodopseudomonas palustris (strain ATCC BAA-98 / CGA009).